The sequence spans 680 residues: DNA-directed RNA polymerase subunit beta' (680 aa).

Residues Cys-68, Cys-70, Cys-86, and Cys-89 each coordinate Zn(2+). Mg(2+)-binding residues include Asp-488, Asp-490, and Asp-492.

Belongs to the RNA polymerase beta' chain family. RpoC1 subfamily. In terms of assembly, in plastids the minimal PEP RNA polymerase catalytic core is composed of four subunits: alpha, beta, beta', and beta''. When a (nuclear-encoded) sigma factor is associated with the core the holoenzyme is formed, which can initiate transcription. Mg(2+) serves as cofactor. It depends on Zn(2+) as a cofactor.

The protein resides in the plastid. The protein localises to the chloroplast. It carries out the reaction RNA(n) + a ribonucleoside 5'-triphosphate = RNA(n+1) + diphosphate. DNA-dependent RNA polymerase catalyzes the transcription of DNA into RNA using the four ribonucleoside triphosphates as substrates. The polypeptide is DNA-directed RNA polymerase subunit beta' (Nicotiana tabacum (Common tobacco)).